The following is a 279-amino-acid chain: Ribosomal RNA small subunit methyltransferase A (279 aa).

The S-adenosyl-L-methionine site is built by Leu-42, Gly-67, Glu-88, Asp-113, and Asn-129.

It belongs to the class I-like SAM-binding methyltransferase superfamily. rRNA adenine N(6)-methyltransferase family. RsmA subfamily.

The protein resides in the cytoplasm. It catalyses the reaction adenosine(1518)/adenosine(1519) in 16S rRNA + 4 S-adenosyl-L-methionine = N(6)-dimethyladenosine(1518)/N(6)-dimethyladenosine(1519) in 16S rRNA + 4 S-adenosyl-L-homocysteine + 4 H(+). Its function is as follows. Specifically dimethylates two adjacent adenosines (A1518 and A1519) in the loop of a conserved hairpin near the 3'-end of 16S rRNA in the 30S particle. May play a critical role in biogenesis of 30S subunits. This chain is Ribosomal RNA small subunit methyltransferase A, found in Thermotoga maritima (strain ATCC 43589 / DSM 3109 / JCM 10099 / NBRC 100826 / MSB8).